Here is a 455-residue protein sequence, read N- to C-terminus: Bifunctional protein GlmU (455 aa).

The segment at 1–226 (MGLSVVILAA…EFEILGVNDR (226 aa)) is pyrophosphorylase. UDP-N-acetyl-alpha-D-glucosamine contacts are provided by residues 8–11 (LAAG), Lys22, Gln73, 78–79 (GT), 99–101 (YGD), Gly136, Glu151, Asn166, and Asn224. Asp101 contributes to the Mg(2+) binding site. Residue Asn224 coordinates Mg(2+). Residues 227–247 (TQLASLERVWQRNVAEKIMAK) are linker. Residues 248-455 (GVSIADPNRF…WQRSVKKTDK (208 aa)) form an N-acetyltransferase region. Residues Arg330 and Lys348 each coordinate UDP-N-acetyl-alpha-D-glucosamine. Residue His360 is the Proton acceptor of the active site. UDP-N-acetyl-alpha-D-glucosamine is bound by residues Tyr363 and Asn374. Acetyl-CoA-binding positions include Ala377, 383–384 (NY), Ser402, Ala420, and Arg437.

In the N-terminal section; belongs to the N-acetylglucosamine-1-phosphate uridyltransferase family. The protein in the C-terminal section; belongs to the transferase hexapeptide repeat family. As to quaternary structure, homotrimer. It depends on Mg(2+) as a cofactor.

It is found in the cytoplasm. It catalyses the reaction alpha-D-glucosamine 1-phosphate + acetyl-CoA = N-acetyl-alpha-D-glucosamine 1-phosphate + CoA + H(+). The enzyme catalyses N-acetyl-alpha-D-glucosamine 1-phosphate + UTP + H(+) = UDP-N-acetyl-alpha-D-glucosamine + diphosphate. The protein operates within nucleotide-sugar biosynthesis; UDP-N-acetyl-alpha-D-glucosamine biosynthesis; N-acetyl-alpha-D-glucosamine 1-phosphate from alpha-D-glucosamine 6-phosphate (route II): step 2/2. It participates in nucleotide-sugar biosynthesis; UDP-N-acetyl-alpha-D-glucosamine biosynthesis; UDP-N-acetyl-alpha-D-glucosamine from N-acetyl-alpha-D-glucosamine 1-phosphate: step 1/1. It functions in the pathway bacterial outer membrane biogenesis; LPS lipid A biosynthesis. In terms of biological role, catalyzes the last two sequential reactions in the de novo biosynthetic pathway for UDP-N-acetylglucosamine (UDP-GlcNAc). The C-terminal domain catalyzes the transfer of acetyl group from acetyl coenzyme A to glucosamine-1-phosphate (GlcN-1-P) to produce N-acetylglucosamine-1-phosphate (GlcNAc-1-P), which is converted into UDP-GlcNAc by the transfer of uridine 5-monophosphate (from uridine 5-triphosphate), a reaction catalyzed by the N-terminal domain. The protein is Bifunctional protein GlmU of Francisella tularensis subsp. tularensis (strain FSC 198).